Reading from the N-terminus, the 96-residue chain is Co-chaperonin GroES (96 aa).

This sequence belongs to the GroES chaperonin family. In terms of assembly, heptamer of 7 subunits arranged in a ring. Interacts with the chaperonin GroEL.

The protein localises to the cytoplasm. Its function is as follows. Together with the chaperonin GroEL, plays an essential role in assisting protein folding. The GroEL-GroES system forms a nano-cage that allows encapsulation of the non-native substrate proteins and provides a physical environment optimized to promote and accelerate protein folding. GroES binds to the apical surface of the GroEL ring, thereby capping the opening of the GroEL channel. This is Co-chaperonin GroES from Polaromonas naphthalenivorans (strain CJ2).